A 255-amino-acid polypeptide reads, in one-letter code: Diphthine synthase (255 aa).

Residues leucine 9, aspartate 85, valine 88, 113–114 (SI), leucine 164, alanine 207, and histidine 232 contribute to the S-adenosyl-L-methionine site.

This sequence belongs to the diphthine synthase family. In terms of assembly, homodimer.

It carries out the reaction 2-[(3S)-amino-3-carboxypropyl]-L-histidyl-[translation elongation factor 2] + 3 S-adenosyl-L-methionine = diphthine-[translation elongation factor 2] + 3 S-adenosyl-L-homocysteine + 3 H(+). It participates in protein modification; peptidyl-diphthamide biosynthesis. In terms of biological role, S-adenosyl-L-methionine-dependent methyltransferase that catalyzes the trimethylation of the amino group of the modified target histidine residue in translation elongation factor 2 (EF-2), to form an intermediate called diphthine. The three successive methylation reactions represent the second step of diphthamide biosynthesis. The sequence is that of Diphthine synthase from Methanococcus maripaludis (strain DSM 14266 / JCM 13030 / NBRC 101832 / S2 / LL).